We begin with the raw amino-acid sequence, 101 residues long: UPF0213 protein lp_2058 (101 aa).

The region spanning 15-92 is the GIY-YIG domain; it reads KKYYFYVLLC…KHQSRAAKLK (78 aa).

This sequence belongs to the UPF0213 family.

This chain is UPF0213 protein lp_2058, found in Lactiplantibacillus plantarum (strain ATCC BAA-793 / NCIMB 8826 / WCFS1) (Lactobacillus plantarum).